The following is a 179-amino-acid chain: Large ribosomal subunit protein uL5 (179 aa).

Belongs to the universal ribosomal protein uL5 family. As to quaternary structure, part of the 50S ribosomal subunit; part of the 5S rRNA/L5/L18/L25 subcomplex. Contacts the 5S rRNA and the P site tRNA. Forms a bridge to the 30S subunit in the 70S ribosome.

Functionally, this is one of the proteins that bind and probably mediate the attachment of the 5S RNA into the large ribosomal subunit, where it forms part of the central protuberance. In the 70S ribosome it contacts protein S13 of the 30S subunit (bridge B1b), connecting the 2 subunits; this bridge is implicated in subunit movement. Contacts the P site tRNA; the 5S rRNA and some of its associated proteins might help stabilize positioning of ribosome-bound tRNAs. The protein is Large ribosomal subunit protein uL5 of Francisella philomiragia subsp. philomiragia (strain ATCC 25017 / CCUG 19701 / FSC 153 / O#319-036).